Reading from the N-terminus, the 324-residue chain is Antihemorrhagic factor cHLP-A (324 aa).

The signal sequence occupies residues 1–19 (MNSLVALVLLGQIIGSTLS). Cystatin fetuin-A-type domains are found at residues 21–130 (QLGP…VKCK) and 141–254 (RNCP…SDCV). Disulfide bonds link Cys-28–Cys-315, Cys-85–Cys-96, Cys-110–Cys-129, Cys-143–Cys-146, Cys-205–Cys-217, and Cys-230–Cys-253. Asn-204 carries N-linked (GlcNAc...) asparagine glycosylation. N-linked (GlcNAc...) asparagine glycosylation occurs at Asn-282.

It belongs to the fetuin family. Homodimer. In terms of tissue distribution, expressed by the liver.

It is found in the secreted. Potent inhibitor of hemorrhagic activity but also proteolytic activities. Inhibition occurs by formation of a non-covalent complex between this protein and the proteinases at their metalloproteinase domains. This is Antihemorrhagic factor cHLP-A from Gloydius brevicauda (Korean slamosa snake).